We begin with the raw amino-acid sequence, 240 residues long: Adenosylcobinamide-GDP ribazoletransferase (240 aa).

5 consecutive transmembrane segments (helical) span residues 31–51 (LLYYPLVGLLFGLLLWLASHL), 62–81 (ALLLTLWVLLSGALHLDGLA), 109–129 (IAVVTLVLVLLLKFCALWVLV), 133–153 (IGAQLLLAPLIGRAAMLGLFL), and 179–199 (VLLVCVLFCLFLGGWSVLLAL).

Belongs to the CobS family. The cofactor is Mg(2+).

Its subcellular location is the cell inner membrane. The catalysed reaction is alpha-ribazole + adenosylcob(III)inamide-GDP = adenosylcob(III)alamin + GMP + H(+). The enzyme catalyses alpha-ribazole 5'-phosphate + adenosylcob(III)inamide-GDP = adenosylcob(III)alamin 5'-phosphate + GMP + H(+). It participates in cofactor biosynthesis; adenosylcobalamin biosynthesis; adenosylcobalamin from cob(II)yrinate a,c-diamide: step 7/7. Functionally, joins adenosylcobinamide-GDP and alpha-ribazole to generate adenosylcobalamin (Ado-cobalamin). Also synthesizes adenosylcobalamin 5'-phosphate from adenosylcobinamide-GDP and alpha-ribazole 5'-phosphate. This is Adenosylcobinamide-GDP ribazoletransferase from Pseudomonas putida (strain ATCC 47054 / DSM 6125 / CFBP 8728 / NCIMB 11950 / KT2440).